We begin with the raw amino-acid sequence, 309 residues long: Oxygen-dependent coproporphyrinogen-III oxidase (309 aa).

Ser94 serves as a coordination point for substrate. Positions 98 and 108 each coordinate a divalent metal cation. His108 (proton donor) is an active-site residue. 110 to 112 lines the substrate pocket; the sequence is NVR. Residues His147 and His177 each coordinate a divalent metal cation. Residues 242–277 form an important for dimerization region; that stretch reads YVEFNLVWDRGTLFGLQTGGRTESILMSLPPLVRWE. Position 260–262 (260–262) interacts with substrate; sequence GGR.

The protein belongs to the aerobic coproporphyrinogen-III oxidase family. In terms of assembly, homodimer. It depends on a divalent metal cation as a cofactor.

It localises to the cytoplasm. The catalysed reaction is coproporphyrinogen III + O2 + 2 H(+) = protoporphyrinogen IX + 2 CO2 + 2 H2O. It functions in the pathway porphyrin-containing compound metabolism; protoporphyrin-IX biosynthesis; protoporphyrinogen-IX from coproporphyrinogen-III (O2 route): step 1/1. In terms of biological role, involved in the heme biosynthesis. Catalyzes the aerobic oxidative decarboxylation of propionate groups of rings A and B of coproporphyrinogen-III to yield the vinyl groups in protoporphyrinogen-IX. This chain is Oxygen-dependent coproporphyrinogen-III oxidase, found in Yersinia pestis bv. Antiqua (strain Antiqua).